A 591-amino-acid chain; its full sequence is Fanconi anemia group C protein homolog (591 aa).

As to quaternary structure, belongs to the multisubunit FA complex composed of FANCA, FANCB, FANCC, FANCE, FANCF, FANCG, FANCL/PHF9 and FANCM. This complex may also include HSP70. Interacts with ZBTB32. Upon IFNG induction, interacts with STAT1. Interacts with CDK1. Interacts with EIF2AK2. As to expression, ubiquitous.

Its subcellular location is the nucleus. The protein resides in the cytoplasm. In terms of biological role, DNA repair protein that may operate in a postreplication repair or a cell cycle checkpoint function. May be implicated in interstrand DNA cross-link repair and in the maintenance of normal chromosome stability. Upon IFNG induction, may facilitate STAT1 activation by recruiting STAT1 to IFNGR1. This chain is Fanconi anemia group C protein homolog (Fancc), found in Mus musculus (Mouse).